The primary structure comprises 194 residues: Ion-translocating oxidoreductase complex subunit A (194 aa).

6 helical membrane-spanning segments follow: residues 4–24 (LALILVSAILVNNFVLVQFLG), 39–59 (IGLSLATTFVLTLAAMCSHIL), 72–92 (LRTIGFILVIAVVVQFTEMLV), 102–122 (VLGIFLPLITTNCIVLGVALL), 135–155 (TTQGFGAGLGFSLVLVLFAAL), and 172–192 (AIGMITAGLMSLAFMGFSGLV).

The protein belongs to the NqrDE/RnfAE family. The complex is composed of six subunits: RnfA, RnfB, RnfC, RnfD, RnfE and RnfG.

It localises to the cell inner membrane. Its function is as follows. Part of a membrane-bound complex that couples electron transfer with translocation of ions across the membrane. This chain is Ion-translocating oxidoreductase complex subunit A, found in Pseudomonas aeruginosa (strain LESB58).